Here is a 434-residue protein sequence, read N- to C-terminus: CCA tRNA nucleotidyltransferase 1, mitochondrial (434 aa).

Residues 1–41 (MLRCLYHWHRPVLNRRWSRLCLPKQYLFTMKLQSPEFQSLF) constitute a mitochondrion transit peptide. ATP contacts are provided by Gly64 and Arg67. Gly64 and Arg67 together coordinate CTP. Mg(2+) is bound by residues Asp77 and Asp79. Positions 151, 194, 197, 200, and 203 each coordinate ATP. The CTP site is built by Arg151, Asp194, Arg197, Arg200, and Arg203. Ser400 carries the post-translational modification Phosphoserine. Lys402 carries the N6-acetyllysine modification.

Belongs to the tRNA nucleotidyltransferase/poly(A) polymerase family. In terms of assembly, monomer, and homodimer; disulfide-linked. Mg(2+) serves as cofactor.

Its subcellular location is the mitochondrion. The protein resides in the cytoplasm. It is found in the nucleus. It carries out the reaction a tRNA precursor + 2 CTP + ATP = a tRNA with a 3' CCA end + 3 diphosphate. The catalysed reaction is a tRNA with a 3' CCA end + 2 CTP + ATP = a tRNA with a 3' CCACCA end + 3 diphosphate. Functionally, nucleotidyltransferase that catalyzes the addition and repair of the essential 3'-terminal CCA sequence in tRNAs, which is necessary for the attachment of amino acids to the 3' terminus of tRNA molecules, using CTP and ATP as substrates. tRNA 3'-terminal CCA addition is required both for tRNA processing and repair. Promotes tRNA repair and recycling downstream of the ribosome-associated quality control (RQC) pathway by mediating addition of the tRNA 3'-terminal CCA following cleavage by ANKZF1 and repair by ELAC1. Also involved in tRNA surveillance by mediating tandem CCA addition to generate a CCACCA at the 3' terminus of unstable tRNAs and tRNA-like transcripts. While stable tRNAs receive only 3'-terminal CCA, unstable tRNAs beginning with GG are marked with CCACCA and rapidly degraded. The structural flexibility of RNA controls the choice between CCA versus CCACCA addition: following the first CCA addition cycle, nucleotide-binding to the active site triggers a clockwise screw motion, producing torque on the RNA. This ejects stable RNAs, whereas unstable RNAs are refolded while bound to the enzyme and subjected to a second CCA catalytic cycle. Its function is as follows. Adds 2 C residues (CC-) to the 3' terminus of tRNA molecules instead of a complete CCA end as isoform 1 does (in vitro). In Homo sapiens (Human), this protein is CCA tRNA nucleotidyltransferase 1, mitochondrial.